Here is a 444-residue protein sequence, read N- to C-terminus: N-succinylarginine dihydrolase (444 aa).

Residues 19–28, Asn110, and 137–138 contribute to the substrate site; these read AGLSFGNVAS and HR. Glu174 is a catalytic residue. Arg214 lines the substrate pocket. The active site involves His250. Substrate contacts are provided by Asp252 and Asn362. Cys368 functions as the Nucleophile in the catalytic mechanism.

It belongs to the succinylarginine dihydrolase family. As to quaternary structure, homodimer.

It carries out the reaction N(2)-succinyl-L-arginine + 2 H2O + 2 H(+) = N(2)-succinyl-L-ornithine + 2 NH4(+) + CO2. It functions in the pathway amino-acid degradation; L-arginine degradation via AST pathway; L-glutamate and succinate from L-arginine: step 2/5. Functionally, catalyzes the hydrolysis of N(2)-succinylarginine into N(2)-succinylornithine, ammonia and CO(2). The protein is N-succinylarginine dihydrolase of Shewanella putrefaciens (strain CN-32 / ATCC BAA-453).